A 345-amino-acid polypeptide reads, in one-letter code: Ferrochelatase (345 aa).

Positions 215 and 296 each coordinate Fe cation.

It belongs to the ferrochelatase family.

The protein localises to the cytoplasm. It catalyses the reaction heme b + 2 H(+) = protoporphyrin IX + Fe(2+). It functions in the pathway porphyrin-containing compound metabolism; protoheme biosynthesis; protoheme from protoporphyrin-IX: step 1/1. Its function is as follows. Catalyzes the ferrous insertion into protoporphyrin IX. In Rhodopseudomonas palustris (strain ATCC BAA-98 / CGA009), this protein is Ferrochelatase.